The sequence spans 446 residues: MAPSAESEDNSLAQFDLLPKLVKNLDRHLIFPLLDAASAQYYDEETNEPRDVDKAREMTKAKFELLKKTNMTDYVANLHCELEGTDEPPAEYAEKRQKVIKQLQDFEDSVSKLRDLLDREEVISNLRSDKVANLEFLKKEHDVTIEMVTALYDFGNFQYSCGNYPAAAELLYQFRVLSTDNDKVSAATWGKLASEILSGNWEGAMEELKKVREDIDSRLFNNPLAQLQHRTWLTHWALFPLFNDENSREALLEMFFSPNYINTIQTSCPWILRYLAVVVIAGRGRARNTGAYQKQLKDVVRIVKQEGYEYSDPVTDFVRALYIDFDFEEAQRQLPRAEEVLRTDFFLMSIGDSFVDAARHLFFESYCKIHARIDLKRLSEQLGLNVDEGEKWIVNLIRDTRLDAKIDFQEGTVVMNHPNSSVYQQVIERTKGGFFRTQVLSAAVAR.

Residues 240-420 enclose the PCI domain; the sequence is PLFNDENSRE…GTVVMNHPNS (181 aa).

It belongs to the eIF-3 subunit E family. Component of the eukaryotic translation initiation factor 3 (eIF-3) complex.

Its subcellular location is the cytoplasm. Its function is as follows. Component of the eukaryotic translation initiation factor 3 (eIF-3) complex, which is involved in protein synthesis of a specialized repertoire of mRNAs and, together with other initiation factors, stimulates binding of mRNA and methionyl-tRNAi to the 40S ribosome. The eIF-3 complex specifically targets and initiates translation of a subset of mRNAs involved in cell proliferation. This Pyricularia oryzae (strain 70-15 / ATCC MYA-4617 / FGSC 8958) (Rice blast fungus) protein is Eukaryotic translation initiation factor 3 subunit E.